The following is a 586-amino-acid chain: Regulatory protein NPR3 (586 aa).

Phosphoserine is present on Ser-10. The BTB domain occupies 60–135 (SDAEIIVDGV…IYTGRLKPFP (76 aa)). Residues 138–152 (VSTCVDPVCSHDCCR) form a C2HC NPR-type zinc finger. Zn(2+) is bound by residues Cys-141, Cys-146, His-148, and Cys-151. ANK repeat units lie at residues 261–291 (ERIG…TLDQ), 293–320 (NGLH…DVNY), and 324–353 (RGYT…NASE). The tract at residues 383–523 (ESSKARLCID…MAEYIDDDIL (141 aa)) is salicylic acid-binding core (SBC). Arg-428 is a binding site for salicylate. Residues 554–586 (YSKDKESKIARSCLSASSSPSSSSIRDDLHNTT) form a disordered region. Residues 565-577 (SCLSASSSPSSSS) are compositionally biased toward low complexity.

The protein belongs to the plant 'ANKYRIN-BTB/POZ' family. 'NPR1-like' subfamily. In terms of assembly, forms homodimers and heterodimers with NPR4 in the presence of salicylic acid (SA). Interacts with TGA2, TGA3, TGA5 and TGA6. Interacts with CUL3A, a core component of the cullin-RING ubiquitin ligases (CRL). Interacts with TGA2 in vivo in the nucleus. Binds to NPR1; this interaction is promoted by association with SA, probably due to conformational changes.

The protein resides in the nucleus. It participates in protein modification; protein ubiquitination. In terms of biological role, salicylic acid (SA)-binding substrate-specific adapter of an E3 ubiquitin-protein ligase complex (CUL3-RBX1-BTB) which mediates the ubiquitination and subsequent proteasomal degradation of NPR1 in response to SA. Together with NPR4, acts as receptor of salicylic acid to monitor immunity in a NPR1-dependent manner and induce systemic acquired resistance (SAR). Involved in the regulation of basal defense responses against pathogens, and may be implicated in the cross-talk between the SA- and JA-dependent signaling pathways. The sequence is that of Regulatory protein NPR3 from Arabidopsis thaliana (Mouse-ear cress).